The chain runs to 267 residues: Fibroin light chain (267 aa).

An N-terminal signal peptide occupies residues 1–16 (MLPFVLVLLVATSALA). Position 19 is an N-acetylserine; in short form (Ser19). A disulfide bond links Cys103 and Cys162.

As to quaternary structure, silk fibroin elementary unit consists in a disulfide-linked heavy and light chain and a p25 glycoprotein in molar ratios of 6:6:1. This results in a complex of approximately 2.3 MDa. Post-translationally, partially N-terminally processed to yield a short form which lacks the first two residues of the long form. In terms of processing, the interchain disulfide bridge is essential for the intracellular transport and secretion of fibroin. Produced exclusively in the posterior (PSG) section of silk glands, which are essentially modified salivary glands.

The protein localises to the secreted. It is likely that the major role of L-chain is to prevent the retention of H-chain in ER by forming the disulfide linkage. In Galleria mellonella (Greater wax moth), this protein is Fibroin light chain (FIBL).